Here is a 216-residue protein sequence, read N- to C-terminus: Somatotropin (216 aa).

An N-terminal signal peptide occupies residues 1 to 26 (MATDSRTSWLLTVSLLCLLWPQEASA). A Zn(2+)-binding site is contributed by H45. A disulfide bridge connects residues C78 and C189. At S131 the chain carries Phosphoserine. A Zn(2+)-binding site is contributed by E198. C206 and C214 are joined by a disulfide.

This sequence belongs to the somatotropin/prolactin family.

It is found in the secreted. In terms of biological role, plays an important role in growth control. Its major role in stimulating body growth is to stimulate the liver and other tissues to secrete IGF1. It stimulates both the differentiation and proliferation of myoblasts. It also stimulates amino acid uptake and protein synthesis in muscle and other tissues. The polypeptide is Somatotropin (Gh1) (Mus musculus (Mouse)).